Here is a 515-residue protein sequence, read N- to C-terminus: Bifunctional purine biosynthesis protein PurH (515 aa).

One can recognise an MGS-like domain in the interval 1-145 (MTKRVLISVS…KNHASVTVVV (145 aa)).

It belongs to the PurH family.

It carries out the reaction (6R)-10-formyltetrahydrofolate + 5-amino-1-(5-phospho-beta-D-ribosyl)imidazole-4-carboxamide = 5-formamido-1-(5-phospho-D-ribosyl)imidazole-4-carboxamide + (6S)-5,6,7,8-tetrahydrofolate. The enzyme catalyses IMP + H2O = 5-formamido-1-(5-phospho-D-ribosyl)imidazole-4-carboxamide. It participates in purine metabolism; IMP biosynthesis via de novo pathway; 5-formamido-1-(5-phospho-D-ribosyl)imidazole-4-carboxamide from 5-amino-1-(5-phospho-D-ribosyl)imidazole-4-carboxamide (10-formyl THF route): step 1/1. The protein operates within purine metabolism; IMP biosynthesis via de novo pathway; IMP from 5-formamido-1-(5-phospho-D-ribosyl)imidazole-4-carboxamide: step 1/1. The polypeptide is Bifunctional purine biosynthesis protein PurH (Streptococcus pneumoniae serotype 19F (strain G54)).